A 402-amino-acid polypeptide reads, in one-letter code: Zinc finger CCHC domain-containing protein 12 (402 aa).

A disordered region spans residues 308 to 341; sequence IDSPHNSRAQFPSTSGGSGYKNNGPGEMRRARKR. Positions 311 to 322 are enriched in polar residues; that stretch reads PHNSRAQFPSTS. The CCHC-type zinc finger occupies 345–362; it reads IRCSYCGEEGHSKETCDN.

Belongs to the ZCCHC12 family. As to quaternary structure, interacts with SMAD1 and CREB-binding protein (CBP). Forms a protein-DNA complex through its association with SMAD1.

In terms of biological role, transcriptional coactivator in the bone morphogenetic protein (BMP)-signaling pathway. It positively modulates BMP signaling by interacting with SMAD1 and associating with CBP in the transcription complex. It contributes to the BMP-induced enhancement of cholinergic-neuron-specific gene expression. In Homo sapiens (Human), this protein is Zinc finger CCHC domain-containing protein 12 (ZCCHC12).